Here is a 356-residue protein sequence, read N- to C-terminus: Vanillin synthase, chloroplastic (356 aa).

Asparagine 122 is a glycosylation site (N-linked (GlcNAc...) asparagine). Disulfide bonds link cysteine 159/cysteine 202 and cysteine 193/cysteine 235. Cysteine 162 is an active-site residue. Asparagine 251 carries an N-linked (GlcNAc...) asparagine glycan. A disulfide bridge links cysteine 293 with cysteine 343. Residues histidine 302 and asparagine 322 contribute to the active site.

This sequence belongs to the peptidase C1 family. As to quaternary structure, forms homodimers, homotrimers and homotetramers. Accumulates in the inner part of vanilla pods (at protein level). Expressed in single cells located a few cell layers from the inner epidermis.

Its subcellular location is the plastid. The protein localises to the chloroplast. It carries out the reaction (E)-ferulate + H2O = vanillin + acetate. The enzyme catalyses 4-O-beta-D-glucosyl-trans-ferulate + H2O = 4-O-beta-D-glucosyl-vanillin + acetate. It functions in the pathway aromatic compound metabolism; phenylpropanoid biosynthesis. Functionally, involved in the biosynthesis of vanillin (4-hydroxy-3-methoxy-benzaldehyde) and derivative natural products, key components of vanilla pods flavor. Catalyzes the double carbon bond cleavage of ferulic acid to vanillin and of their respective glucosides via a coupled non-oxidative hydratase/lyase reaction. Inactive toward p-coumaric acid, caffeic acid and their glucosides derivatives. The protein is Vanillin synthase, chloroplastic of Vanilla planifolia (Vanilla).